We begin with the raw amino-acid sequence, 231 residues long: 7-cyano-7-deazaguanine synthase (231 aa).

8 to 18 (FSGGQDSTTCL) is an ATP binding site. Residues Cys-188, Cys-197, Cys-200, and Cys-203 each contribute to the Zn(2+) site.

Belongs to the QueC family. It depends on Zn(2+) as a cofactor.

It catalyses the reaction 7-carboxy-7-deazaguanine + NH4(+) + ATP = 7-cyano-7-deazaguanine + ADP + phosphate + H2O + H(+). It participates in purine metabolism; 7-cyano-7-deazaguanine biosynthesis. In terms of biological role, catalyzes the ATP-dependent conversion of 7-carboxy-7-deazaguanine (CDG) to 7-cyano-7-deazaguanine (preQ(0)). The chain is 7-cyano-7-deazaguanine synthase from Pectobacterium carotovorum subsp. carotovorum (strain PC1).